The primary structure comprises 254 residues: Uracil-DNA glycosylase (254 aa).

Residue D78 is the Proton acceptor of the active site.

Belongs to the uracil-DNA glycosylase (UDG) superfamily. UNG family.

Its subcellular location is the cytoplasm. The enzyme catalyses Hydrolyzes single-stranded DNA or mismatched double-stranded DNA and polynucleotides, releasing free uracil.. Excises uracil residues from the DNA which can arise as a result of misincorporation of dUMP residues by DNA polymerase or due to deamination of cytosine. In Bordetella petrii (strain ATCC BAA-461 / DSM 12804 / CCUG 43448), this protein is Uracil-DNA glycosylase.